The sequence spans 265 residues: Hydroxyethylthiazole kinase 2 (265 aa).

Position 39 (methionine 39) interacts with substrate. Residues lysine 115 and threonine 168 each coordinate ATP. Glycine 195 lines the substrate pocket.

This sequence belongs to the Thz kinase family. Mg(2+) is required as a cofactor.

It carries out the reaction 5-(2-hydroxyethyl)-4-methylthiazole + ATP = 4-methyl-5-(2-phosphooxyethyl)-thiazole + ADP + H(+). It functions in the pathway cofactor biosynthesis; thiamine diphosphate biosynthesis; 4-methyl-5-(2-phosphoethyl)-thiazole from 5-(2-hydroxyethyl)-4-methylthiazole: step 1/1. Catalyzes the phosphorylation of the hydroxyl group of 4-methyl-5-beta-hydroxyethylthiazole (THZ). The sequence is that of Hydroxyethylthiazole kinase 2 from Clostridium botulinum (strain Kyoto / Type A2).